Reading from the N-terminus, the 162-residue chain is Nucleotide-binding protein CMM_2802 (162 aa).

It belongs to the YajQ family.

In terms of biological role, nucleotide-binding protein. The protein is Nucleotide-binding protein CMM_2802 of Clavibacter michiganensis subsp. michiganensis (strain NCPPB 382).